A 737-amino-acid polypeptide reads, in one-letter code: MSVRNNSAITPELIAHHGLKIDEYQRILELIGREPTFTELGIFSAMWNEHCSYKSSKKWLKTLPTKGKCVIQGPGENAGVVDIGNGQCVVFKMESHNHPSYIEPYQGAATGIGGILRDIFTMGARPVAAINALRFGSPDHPRTRHLVSGVVSGIGGYSNAFGVPTVGGEVNFDKRYNGNILVNAFAAGIAKIDSIFYSKAQGVGLPVVYLGAKTGRDGVGGATMASAEFDDAIDEKRPTVQVGDPFTEKCLLEACLELMALKAVIAIQDMGAAGLTSSSVEMGAKGNLGIELNLDKIPVREENMTAYEIMLSESQERMLMVLKPEMEKQAAAIFHKWGLDFSIIGKTTDDLRFRVLHQGKEVVNLPIKELGDEAPVYDRPWIAPSPKAILKAEEVKEIENFGDALLTLLNSADQSSRRWVYEQYDTFIQGNSLVRPGGDAGVIRVDNNDKHALAFSSDVTPRYCEADPYEGGKQAVAECWRNISATGATPLAATDNLNFGNPEKPEIMGQLVFAIKGIGEACKELDFPIVSGNVSLYNETNGESILPTPTIAGVGIIDDWLKVVTVGGMQDGDIIILVGPCGSHLGQSIYVRDILNIDTGTPPHVDLQLEKKNGQFVRDVINRGFIHAAHDISDGGLAIALAEMVIKSGKGIRAKLSNISPRHAELFGEDQGRYLIAIKPNALNSLKELSQTNMISLTELGTVEGDALDIKDTLSLSVSQLTQAYESWFPKFMGNST.

H50 is a catalytic residue. ATP-binding residues include Y53 and K92. E94 serves as a coordination point for Mg(2+). Substrate-binding positions include 95–98 (SHNH) and R117. H96 functions as the Proton acceptor in the catalytic mechanism. D118 contributes to the Mg(2+) binding site. Q241 contributes to the substrate binding site. D269 is a binding site for Mg(2+). 313–315 (ESQ) serves as a coordination point for substrate. ATP-binding residues include D495 and G532. N533 provides a ligand contact to Mg(2+). S535 serves as a coordination point for substrate.

The protein belongs to the FGAMS family. In terms of assembly, monomer. Part of the FGAM synthase complex composed of 1 PurL, 1 PurQ and 2 PurS subunits.

The protein resides in the cytoplasm. It catalyses the reaction N(2)-formyl-N(1)-(5-phospho-beta-D-ribosyl)glycinamide + L-glutamine + ATP + H2O = 2-formamido-N(1)-(5-O-phospho-beta-D-ribosyl)acetamidine + L-glutamate + ADP + phosphate + H(+). It functions in the pathway purine metabolism; IMP biosynthesis via de novo pathway; 5-amino-1-(5-phospho-D-ribosyl)imidazole from N(2)-formyl-N(1)-(5-phospho-D-ribosyl)glycinamide: step 1/2. In terms of biological role, part of the phosphoribosylformylglycinamidine synthase complex involved in the purines biosynthetic pathway. Catalyzes the ATP-dependent conversion of formylglycinamide ribonucleotide (FGAR) and glutamine to yield formylglycinamidine ribonucleotide (FGAM) and glutamate. The FGAM synthase complex is composed of three subunits. PurQ produces an ammonia molecule by converting glutamine to glutamate. PurL transfers the ammonia molecule to FGAR to form FGAM in an ATP-dependent manner. PurS interacts with PurQ and PurL and is thought to assist in the transfer of the ammonia molecule from PurQ to PurL. This chain is Phosphoribosylformylglycinamidine synthase subunit PurL, found in Bartonella bacilliformis (strain ATCC 35685 / KC583 / Herrer 020/F12,63).